A 251-amino-acid polypeptide reads, in one-letter code: CDP-diacylglycerol pyrophosphatase (251 aa).

Residues 5–25 (GYFLLAVIVIVAAAGVGYWKF) form a helical membrane-spanning segment.

It belongs to the Cdh family.

It localises to the cell inner membrane. The enzyme catalyses a CDP-1,2-diacyl-sn-glycerol + H2O = a 1,2-diacyl-sn-glycero-3-phosphate + CMP + 2 H(+). The protein operates within phospholipid metabolism; CDP-diacylglycerol degradation; phosphatidate from CDP-diacylglycerol: step 1/1. The polypeptide is CDP-diacylglycerol pyrophosphatase (Salmonella typhi).